The following is a 222-amino-acid chain: von Willebrand factor C domain-containing protein 2-like (222 aa).

An N-terminal signal peptide occupies residues Met-1 to Ser-21. VWFC domains follow at residues Lys-51–Lys-110 and Asn-114–Lys-172.

In terms of assembly, peripherally associated with AMPAR complex. AMPAR complex consists of an inner core made of 4 pore-forming GluA/GRIA proteins (GRIA1, GRIA2, GRIA3 and GRIA4) and 4 major auxiliary subunits arranged in a twofold symmetry. One of the two pairs of distinct binding sites is occupied either by CNIH2, CNIH3 or CACNG2, CACNG3. The other harbors CACNG2, CACNG3, CACNG4, CACNG8 or GSG1L. This inner core of AMPAR complex is complemented by outer core constituents binding directly to the GluA/GRIA proteins at sites distinct from the interaction sites of the inner core constituents. Outer core constituents include at least PRRT1, PRRT2, CKAMP44/SHISA9, FRRS1L and NRN1. The proteins of the inner and outer core serve as a platform for other, more peripherally associated AMPAR constituents, including VWC2L. Alone or in combination, these auxiliary subunits control the gating and pharmacology of the AMPAR complex and profoundly impact their biogenesis and protein processing. In terms of tissue distribution, predominantly expressed in the brain (at protein level). Also detected in bones, including femur and calvaria, heart, lung and kidney. Isoform 5 is predominant in lung and heart, compared to isoforms 1 and 3. Isoform 4 is expressed in femur and calvaria at higher levels than isoforms 1 and 5. Isoforms 1 and 4 are expressed at higher levels than isoform 5 in kidney and brain.

Its subcellular location is the secreted. The protein resides in the synapse. Its function is as follows. May play a role in neurogenesis. May promote matrix mineralization, but has been shown to weakly, but significantly inhibit BMP2 and BMP6 activity in a preosteoblastic cell line. The protein is von Willebrand factor C domain-containing protein 2-like (Vwc2l) of Mus musculus (Mouse).